The chain runs to 65 residues: DNA gyrase inhibitor YacG (65 aa).

The Zn(2+) site is built by C10, C13, C29, and C33. The interval 45–65 (EKAIPGAPDMSDSDGWSEDQY) is disordered. Residues 55-65 (SDSDGWSEDQY) show a composition bias toward acidic residues.

This sequence belongs to the DNA gyrase inhibitor YacG family. As to quaternary structure, interacts with GyrB. Requires Zn(2+) as cofactor.

In terms of biological role, inhibits all the catalytic activities of DNA gyrase by preventing its interaction with DNA. Acts by binding directly to the C-terminal domain of GyrB, which probably disrupts DNA binding by the gyrase. In Vibrio cholerae serotype O1 (strain ATCC 39315 / El Tor Inaba N16961), this protein is DNA gyrase inhibitor YacG.